We begin with the raw amino-acid sequence, 152 residues long: SsrA-binding protein (152 aa).

The disordered stretch occupies residues 130-152 (HDKRQDLKQRQDKREMERAMKQR). Positions 132-152 (KRQDLKQRQDKREMERAMKQR) are enriched in basic and acidic residues.

This sequence belongs to the SmpB family.

It is found in the cytoplasm. Functionally, required for rescue of stalled ribosomes mediated by trans-translation. Binds to transfer-messenger RNA (tmRNA), required for stable association of tmRNA with ribosomes. tmRNA and SmpB together mimic tRNA shape, replacing the anticodon stem-loop with SmpB. tmRNA is encoded by the ssrA gene; the 2 termini fold to resemble tRNA(Ala) and it encodes a 'tag peptide', a short internal open reading frame. During trans-translation Ala-aminoacylated tmRNA acts like a tRNA, entering the A-site of stalled ribosomes, displacing the stalled mRNA. The ribosome then switches to translate the ORF on the tmRNA; the nascent peptide is terminated with the 'tag peptide' encoded by the tmRNA and targeted for degradation. The ribosome is freed to recommence translation, which seems to be the essential function of trans-translation. The chain is SsrA-binding protein from Thermosynechococcus vestitus (strain NIES-2133 / IAM M-273 / BP-1).